The chain runs to 971 residues: Exportin-2 (971 aa).

Met-1 bears the N-acetylmethionine mark. In terms of domain architecture, Importin N-terminal spans 29 to 102 (AEKFLESVEG…KANIVHLMLS (74 aa)). Ser-112 carries the phosphoserine modification. Lys-574 and Lys-824 each carry N6-acetyllysine. Phosphoserine is present on Ser-931.

It belongs to the XPO2/CSE1 family. As to quaternary structure, found in a complex with CSE1L/XPO2, Ran and KPNA2. Binds with high affinity to importin-alpha only in the presence of RanGTP. The complex is dissociated by the combined action of RanBP1 and RanGAP1. Interacts with CFTR. In terms of tissue distribution, detected in brain, placenta, ovary, testis and trachea (at protein level). Widely expressed. Highly expressed in testis and in proliferating cells.

It is found in the cytoplasm. It localises to the nucleus. Functionally, export receptor for importin-alpha. Mediates importin-alpha re-export from the nucleus to the cytoplasm after import substrates (cargos) have been released into the nucleoplasm. In the nucleus binds cooperatively to importin-alpha and to the GTPase Ran in its active GTP-bound form. Docking of this trimeric complex to the nuclear pore complex (NPC) is mediated through binding to nucleoporins. Upon transit of a nuclear export complex into the cytoplasm, disassembling of the complex and hydrolysis of Ran-GTP to Ran-GDP (induced by RANBP1 and RANGAP1, respectively) cause release of the importin-alpha from the export receptor. CSE1L/XPO2 then return to the nuclear compartment and mediate another round of transport. The directionality of nuclear export is thought to be conferred by an asymmetric distribution of the GTP- and GDP-bound forms of Ran between the cytoplasm and nucleus. The polypeptide is Exportin-2 (CSE1L) (Homo sapiens (Human)).